The sequence spans 393 residues: NAD(P)H-quinone oxidoreductase subunit H, chloroplastic (393 aa).

It belongs to the complex I 49 kDa subunit family. As to quaternary structure, NDH is composed of at least 16 different subunits, 5 of which are encoded in the nucleus.

It is found in the plastid. The protein localises to the chloroplast thylakoid membrane. The catalysed reaction is a plastoquinone + NADH + (n+1) H(+)(in) = a plastoquinol + NAD(+) + n H(+)(out). It catalyses the reaction a plastoquinone + NADPH + (n+1) H(+)(in) = a plastoquinol + NADP(+) + n H(+)(out). Its function is as follows. NDH shuttles electrons from NAD(P)H:plastoquinone, via FMN and iron-sulfur (Fe-S) centers, to quinones in the photosynthetic chain and possibly in a chloroplast respiratory chain. The immediate electron acceptor for the enzyme in this species is believed to be plastoquinone. Couples the redox reaction to proton translocation, and thus conserves the redox energy in a proton gradient. This Acorus calamus var. americanus (American sweet flag) protein is NAD(P)H-quinone oxidoreductase subunit H, chloroplastic.